The sequence spans 273 residues: Tryptophan synthase alpha chain (273 aa).

Active-site proton acceptor residues include Glu-49 and Asp-60.

Belongs to the TrpA family. As to quaternary structure, tetramer of two alpha and two beta chains.

The catalysed reaction is (1S,2R)-1-C-(indol-3-yl)glycerol 3-phosphate + L-serine = D-glyceraldehyde 3-phosphate + L-tryptophan + H2O. It functions in the pathway amino-acid biosynthesis; L-tryptophan biosynthesis; L-tryptophan from chorismate: step 5/5. Functionally, the alpha subunit is responsible for the aldol cleavage of indoleglycerol phosphate to indole and glyceraldehyde 3-phosphate. The chain is Tryptophan synthase alpha chain from Albidiferax ferrireducens (strain ATCC BAA-621 / DSM 15236 / T118) (Rhodoferax ferrireducens).